The primary structure comprises 782 residues: General transcription and DNA repair factor IIH helicase/translocase subunit XPB (782 aa).

Positions 1-11 are enriched in basic and acidic residues; it reads MGKRDRADRDK. 2 disordered regions span residues 1–51 and 218–241; these read MGKR…ESGT and SAIS…PQGK. The short motif at 6–18 is the Nuclear localization signal element; the sequence is RADRDKKKSRKRH. Over residues 21–30 the composition is skewed to acidic residues; it reads DEEDDEEDAP. Over residues 218–236 the composition is skewed to polar residues; it reads SAISKTAESSGGPSTSRVT. In terms of domain architecture, Helicase ATP-binding spans 327-488; sequence MFGNGRARSG…DLNFLIGPKL (162 aa). ATP is bound at residue 340–347; that stretch reads LPCGAGKS. The DEVH box signature appears at 441-444; the sequence is DEVH. Residues 542-702 enclose the Helicase C-terminal domain; the sequence is RACQFLIKFH…LAGMEEEDLA (161 aa). Phosphoserine is present on serine 686. At serine 751 the chain carries Phosphoserine; by CK2.

This sequence belongs to the helicase family. RAD25/XPB subfamily. In terms of assembly, component of the 7-subunit TFIIH core complex composed of XPB/ERCC3, XPD/ERCC2, GTF2H1, GTF2H2, GTF2H3, GTF2H4 and GTF2H5, which is active in NER. The core complex associates with the 3-subunit CDK-activating kinase (CAK) module composed of CCNH/cyclin H, CDK7 and MNAT1 to form the 10-subunit holoenzyme (holo-TFIIH) active in transcription. Interacts with PUF60. Interacts with ATF7IP. Interacts with KAT2A; leading to KAT2A recruitment to promoters and acetylation of histones. Part of TBP-based Pol II pre-initiation complex (PIC), in which Pol II core assembles with general transcription factors and other specific initiation factors including GTF2E1, GTF2E2, GTF2F1, GTF2F2, TCEA1, ERCC2, ERCC3, GTF2H2, GTF2H3, GTF2H4, GTF2H5, GTF2A1, GTF2A2, GTF2B and TBP; this large multi-subunit PIC complex mediates DNA unwinding and targets Pol II core to the transcription start site where the first phosphodiester bond forms. In terms of processing, phosphorylation on Ser-751 by CK2 controls the 5'-excision activity of ERCC1-XPF endonuclease; phosphorylated protein inhibits the excision activity and thus NER. Dephosphorylation reactivates the 5'-excision step. Phosphorylation has no effect on transcription or the 3'-5' helicase activity.

It is found in the nucleus. The enzyme catalyses Couples ATP hydrolysis with the unwinding of duplex DNA by translocating in the 3'-5' direction.. It catalyses the reaction ATP + H2O = ADP + phosphate + H(+). With respect to regulation, phosphorylation on Ser-751 by CK2 controls the 5'-excision activity of ERCC1-XPF endonuclease; phosphorylated protein inhibits the excision activity and thus NER. ATPase activity is stimulated by TFIIH subunit p52 (GTF2H4). DNA translocase activity by this subunit in TFIIH is stimulated by XPA, ERCC5/XPG and XFP plus ERCC1. ATP-dependent 3'-5' DNA helicase/translocase; binds dsDNA rather than ssDNA, unzipping it in a translocase rather than classical helicase activity. Component of the general transcription and DNA repair factor IIH (TFIIH) core complex. When complexed to CDK-activating kinase (CAK), involved in RNA transcription by RNA polymerase II. The ATPase activity of XPB/ERCC3, but not its helicase activity, is required for DNA opening; it may wrap around the damaged DNA wedging it open, causing localized melting and twisting that allows XPD/ERCC2 helicase to anchor. The ATP-dependent helicase activity of XPB/ERCC3 may be required for promoter escape. Also involved in transcription-coupled nucleotide excision repair (NER) of damaged DNA. In NER, TFIIH acts by opening DNA around the lesion to allow the excision of the damaged oligonucleotide and its replacement by a new DNA fragment. The structure of the TFIIH transcription complex differs from the NER-TFIIH complex; large movements by XPD/ERCC2 and XPB/ERCC3 are stabilized by XPA. The chain is General transcription and DNA repair factor IIH helicase/translocase subunit XPB (ERCC3) from Pongo abelii (Sumatran orangutan).